Consider the following 455-residue polypeptide: Bifunctional protein GlmU (455 aa).

The tract at residues 1 to 226 (MGLSVVILAA…EFEILGVNDR (226 aa)) is pyrophosphorylase. UDP-N-acetyl-alpha-D-glucosamine is bound by residues 8–11 (LAAG), lysine 22, glutamine 73, 78–79 (GT), 99–101 (YGD), glycine 136, glutamate 151, asparagine 166, and asparagine 224. Residue aspartate 101 coordinates Mg(2+). Asparagine 224 contributes to the Mg(2+) binding site. The interval 227 to 247 (TQLASLERVWQRNVAEKIMAK) is linker. An N-acetyltransferase region spans residues 248–455 (GVSIADPNRF…WQRSVKKTDK (208 aa)). Residues arginine 330 and lysine 348 each coordinate UDP-N-acetyl-alpha-D-glucosamine. The Proton acceptor role is filled by histidine 360. UDP-N-acetyl-alpha-D-glucosamine is bound by residues tyrosine 363 and asparagine 374. Acetyl-CoA contacts are provided by residues alanine 377, 383–384 (NY), serine 402, alanine 420, and arginine 437.

It in the N-terminal section; belongs to the N-acetylglucosamine-1-phosphate uridyltransferase family. The protein in the C-terminal section; belongs to the transferase hexapeptide repeat family. As to quaternary structure, homotrimer. Mg(2+) is required as a cofactor.

It is found in the cytoplasm. It carries out the reaction alpha-D-glucosamine 1-phosphate + acetyl-CoA = N-acetyl-alpha-D-glucosamine 1-phosphate + CoA + H(+). The enzyme catalyses N-acetyl-alpha-D-glucosamine 1-phosphate + UTP + H(+) = UDP-N-acetyl-alpha-D-glucosamine + diphosphate. The protein operates within nucleotide-sugar biosynthesis; UDP-N-acetyl-alpha-D-glucosamine biosynthesis; N-acetyl-alpha-D-glucosamine 1-phosphate from alpha-D-glucosamine 6-phosphate (route II): step 2/2. It participates in nucleotide-sugar biosynthesis; UDP-N-acetyl-alpha-D-glucosamine biosynthesis; UDP-N-acetyl-alpha-D-glucosamine from N-acetyl-alpha-D-glucosamine 1-phosphate: step 1/1. It functions in the pathway bacterial outer membrane biogenesis; LPS lipid A biosynthesis. In terms of biological role, catalyzes the last two sequential reactions in the de novo biosynthetic pathway for UDP-N-acetylglucosamine (UDP-GlcNAc). The C-terminal domain catalyzes the transfer of acetyl group from acetyl coenzyme A to glucosamine-1-phosphate (GlcN-1-P) to produce N-acetylglucosamine-1-phosphate (GlcNAc-1-P), which is converted into UDP-GlcNAc by the transfer of uridine 5-monophosphate (from uridine 5-triphosphate), a reaction catalyzed by the N-terminal domain. This is Bifunctional protein GlmU from Francisella tularensis subsp. tularensis (strain FSC 198).